A 379-amino-acid chain; its full sequence is Sulfate adenylyltransferase (379 aa).

This sequence belongs to the sulfate adenylyltransferase family.

It carries out the reaction sulfate + ATP + H(+) = adenosine 5'-phosphosulfate + diphosphate. It participates in sulfur metabolism; hydrogen sulfide biosynthesis; sulfite from sulfate: step 1/3. This is Sulfate adenylyltransferase from Thermococcus onnurineus (strain NA1).